Consider the following 380-residue polypeptide: Cytochrome b (380 aa).

The next 4 membrane-spanning stretches (helical) occupy residues 34 to 54 (FGSLLGICLLTQILTGLLLAM), 78 to 99 (WLIRNLHANGASFFFICIYLHI), 114 to 134 (WNTGVILLLTLMATAFVGYVL), and 179 to 199 (FFALHFLLPFMITGLTTIHLT). Heme b is bound by residues H84 and H98. 2 residues coordinate heme b: H183 and H197. H202 lines the a ubiquinone pocket. 4 consecutive transmembrane segments (helical) span residues 227-247 (LKDFLGFTLMLLPLTTLALFS), 289-309 (LGGVLALAASVLILFLAPFLH), 321-341 (ISQLLFWILVTNLLILTWVGS), and 348-368 (FIIIGQLASITYFTILLILFP).

It belongs to the cytochrome b family. The cytochrome bc1 complex contains 11 subunits: 3 respiratory subunits (MT-CYB, CYC1 and UQCRFS1), 2 core proteins (UQCRC1 and UQCRC2) and 6 low-molecular weight proteins (UQCRH/QCR6, UQCRB/QCR7, UQCRQ/QCR8, UQCR10/QCR9, UQCR11/QCR10 and a cleavage product of UQCRFS1). This cytochrome bc1 complex then forms a dimer. Requires heme b as cofactor.

The protein resides in the mitochondrion inner membrane. In terms of biological role, component of the ubiquinol-cytochrome c reductase complex (complex III or cytochrome b-c1 complex) that is part of the mitochondrial respiratory chain. The b-c1 complex mediates electron transfer from ubiquinol to cytochrome c. Contributes to the generation of a proton gradient across the mitochondrial membrane that is then used for ATP synthesis. The polypeptide is Cytochrome b (MT-CYB) (Pelecanoides urinatrix (Common diving petrel)).